We begin with the raw amino-acid sequence, 1099 residues long: ATP-dependent helicase/deoxyribonuclease subunit B (1099 aa).

Residues C766, C1056, C1059, and C1065 each coordinate [4Fe-4S] cluster.

Belongs to the helicase family. AddB/RexB type 2 subfamily. Heterodimer of AddA and RexB. Mg(2+) is required as a cofactor. The cofactor is [4Fe-4S] cluster.

Functionally, the heterodimer acts as both an ATP-dependent DNA helicase and an ATP-dependent, dual-direction single-stranded exonuclease. Recognizes the chi site generating a DNA molecule suitable for the initiation of homologous recombination. This subunit has 5' -&gt; 3' nuclease activity but not helicase activity. The chain is ATP-dependent helicase/deoxyribonuclease subunit B from Lactococcus lactis subsp. lactis (strain IL1403) (Streptococcus lactis).